Consider the following 298-residue polypeptide: Glycine--tRNA ligase alpha subunit (298 aa).

This sequence belongs to the class-II aminoacyl-tRNA synthetase family. In terms of assembly, tetramer of two alpha and two beta subunits.

Its subcellular location is the cytoplasm. The catalysed reaction is tRNA(Gly) + glycine + ATP = glycyl-tRNA(Gly) + AMP + diphosphate. The polypeptide is Glycine--tRNA ligase alpha subunit (Helicobacter pylori (strain HPAG1)).